The primary structure comprises 393 residues: Homoserine O-succinyltransferase (393 aa).

The 311-residue stretch at 62-372 (NAVLVCHALN…PHGHDAFLLD (311 aa)) folds into the AB hydrolase-1 domain. The active-site Nucleophile is Ser168. Arg238 lines the substrate pocket. Residues Asp333 and His366 contribute to the active site. Residue Asp367 coordinates substrate.

It belongs to the AB hydrolase superfamily. MetX family. As to quaternary structure, homodimer.

Its subcellular location is the cytoplasm. The catalysed reaction is L-homoserine + succinyl-CoA = O-succinyl-L-homoserine + CoA. It functions in the pathway amino-acid biosynthesis; L-methionine biosynthesis via de novo pathway; O-succinyl-L-homoserine from L-homoserine: step 1/1. Its function is as follows. Transfers a succinyl group from succinyl-CoA to L-homoserine, forming succinyl-L-homoserine. This is Homoserine O-succinyltransferase from Cupriavidus necator (strain ATCC 17699 / DSM 428 / KCTC 22496 / NCIMB 10442 / H16 / Stanier 337) (Ralstonia eutropha).